Here is a 343-residue protein sequence, read N- to C-terminus: 4-hydroxythreonine-4-phosphate dehydrogenase (343 aa).

Substrate-binding residues include His141 and Thr142. A divalent metal cation contacts are provided by His175, His220, and His275. Residues Lys283, Asn292, and Arg301 each coordinate substrate.

It belongs to the PdxA family. Homodimer. Zn(2+) serves as cofactor. Mg(2+) is required as a cofactor. The cofactor is Co(2+).

It localises to the cytoplasm. The catalysed reaction is 4-(phosphooxy)-L-threonine + NAD(+) = 3-amino-2-oxopropyl phosphate + CO2 + NADH. The protein operates within cofactor biosynthesis; pyridoxine 5'-phosphate biosynthesis; pyridoxine 5'-phosphate from D-erythrose 4-phosphate: step 4/5. In terms of biological role, catalyzes the NAD(P)-dependent oxidation of 4-(phosphooxy)-L-threonine (HTP) into 2-amino-3-oxo-4-(phosphooxy)butyric acid which spontaneously decarboxylates to form 3-amino-2-oxopropyl phosphate (AHAP). This chain is 4-hydroxythreonine-4-phosphate dehydrogenase, found in Janthinobacterium sp. (strain Marseille) (Minibacterium massiliensis).